The chain runs to 305 residues: Ribonuclease BN (305 aa).

7 residues coordinate Zn(2+): histidine 64, histidine 66, aspartate 68, histidine 69, histidine 141, aspartate 212, and histidine 270. Residue aspartate 68 is the Proton acceptor of the active site.

Belongs to the RNase Z family. RNase BN subfamily. As to quaternary structure, homodimer. Requires Zn(2+) as cofactor.

Functionally, zinc phosphodiesterase, which has both exoribonuclease and endoribonuclease activities. This chain is Ribonuclease BN, found in Enterobacter sp. (strain 638).